The primary structure comprises 228 residues: MANELTWHDVLAEEKQQPYFLNTLQTVASERQSGVTIYPPQKDVFNAFRFTELGDVKVVILGQDPYHGPGQAHGLAFSVRPGIATPPSLLNMYKELENTIPGFTRPNHGYLESWARQGVLLLNTVLTVRAGQAHSHASLGWETFTDKVISLINQHREGVVFLLWGSHAQKKGAIIDXQRHHVLKAPHPSPLSAHRGFFGCNHFVLANQWLEQRGETPIDWMPVLPAES.

Aspartate 64 acts as the Proton acceptor in catalysis.

Belongs to the uracil-DNA glycosylase (UDG) superfamily. UNG family. Monomer.

The protein localises to the cytoplasm. It catalyses the reaction Hydrolyzes single-stranded DNA or mismatched double-stranded DNA and polynucleotides, releasing free uracil.. Its function is as follows. Excises uracil residues from the DNA which can arise as a result of misincorporation of dUMP residues by DNA polymerase or due to deamination of cytosine. This chain is Uracil-DNA glycosylase, found in Escherichia coli O6:H1 (strain CFT073 / ATCC 700928 / UPEC).